Here is a 463-residue protein sequence, read N- to C-terminus: Adenosylhomocysteinase (463 aa).

Residues Thr54, Asp128, and Glu189 each coordinate substrate. 190–192 is an NAD(+) binding site; the sequence is TTT. Residues Lys219 and Asp223 each coordinate substrate. NAD(+) is bound by residues Asn224, 253-258, Glu276, Asn311, 332-334, and Asn377; these read GYGDVG and IGH.

Belongs to the adenosylhomocysteinase family. Requires NAD(+) as cofactor.

Its subcellular location is the cytoplasm. The catalysed reaction is S-adenosyl-L-homocysteine + H2O = L-homocysteine + adenosine. It functions in the pathway amino-acid biosynthesis; L-homocysteine biosynthesis; L-homocysteine from S-adenosyl-L-homocysteine: step 1/1. In terms of biological role, may play a key role in the regulation of the intracellular concentration of adenosylhomocysteine. The sequence is that of Adenosylhomocysteinase from Cereibacter sphaeroides (Rhodobacter sphaeroides).